Consider the following 126-residue polypeptide: Aspartate 1-decarboxylase (126 aa).

The active-site Schiff-base intermediate with substrate; via pyruvic acid is Ser25. Position 25 is a pyruvic acid (Ser) (Ser25). Thr57 is a binding site for substrate. Catalysis depends on Tyr58, which acts as the Proton donor. Position 73-75 (73-75) interacts with substrate; that stretch reads GAA.

This sequence belongs to the PanD family. In terms of assembly, heterooctamer of four alpha and four beta subunits. The cofactor is pyruvate. Post-translationally, is synthesized initially as an inactive proenzyme, which is activated by self-cleavage at a specific serine bond to produce a beta-subunit with a hydroxyl group at its C-terminus and an alpha-subunit with a pyruvoyl group at its N-terminus.

It localises to the cytoplasm. The enzyme catalyses L-aspartate + H(+) = beta-alanine + CO2. It functions in the pathway cofactor biosynthesis; (R)-pantothenate biosynthesis; beta-alanine from L-aspartate: step 1/1. Catalyzes the pyruvoyl-dependent decarboxylation of aspartate to produce beta-alanine. The chain is Aspartate 1-decarboxylase from Salmonella arizonae (strain ATCC BAA-731 / CDC346-86 / RSK2980).